Consider the following 353-residue polypeptide: Photosystem II protein D1 (353 aa).

Thr-2 is modified (N-acetylthreonine). Residue Thr-2 is modified to Phosphothreonine. A run of 3 helical transmembrane segments spans residues 29–46 (YIGW…TAIS), 118–133 (HFLL…EWEL), and 142–156 (WIAV…AATA). His-118 contacts chlorophyll a. Tyr-126 is a pheophytin a binding site. The [CaMn4O5] cluster site is built by Asp-170 and Glu-189. Residues 197 to 218 (FHMLGVAGVFGGSLFSAMHGSL) form a helical membrane-spanning segment. His-198 serves as a coordination point for chlorophyll a. A quinone contacts are provided by residues His-215 and 264–265 (SF). His-215 contributes to the Fe cation binding site. His-272 contacts Fe cation. The chain crosses the membrane as a helical span at residues 274 to 288 (FLAVWPVVGIWFTAM). Residues His-332, Glu-333, Asp-342, and Ala-344 each contribute to the [CaMn4O5] cluster site. The propeptide occupies 345-353 (SVEAPAVNG).

This sequence belongs to the reaction center PufL/M/PsbA/D family. In terms of assembly, PSII is composed of 1 copy each of membrane proteins PsbA, PsbB, PsbC, PsbD, PsbE, PsbF, PsbH, PsbI, PsbJ, PsbK, PsbL, PsbM, PsbT, PsbX, PsbY, PsbZ, Psb30/Ycf12, at least 3 peripheral proteins of the oxygen-evolving complex and a large number of cofactors. It forms dimeric complexes. Requires The D1/D2 heterodimer binds P680, chlorophylls that are the primary electron donor of PSII, and subsequent electron acceptors. It shares a non-heme iron and each subunit binds pheophytin, quinone, additional chlorophylls, carotenoids and lipids. D1 provides most of the ligands for the Mn4-Ca-O5 cluster of the oxygen-evolving complex (OEC). There is also a Cl(-1) ion associated with D1 and D2, which is required for oxygen evolution. The PSII complex binds additional chlorophylls, carotenoids and specific lipids. as cofactor. In terms of processing, tyr-161 forms a radical intermediate that is referred to as redox-active TyrZ, YZ or Y-Z. C-terminally processed by CTPA; processing is essential to allow assembly of the oxygen-evolving complex and thus photosynthetic growth.

The protein resides in the plastid. Its subcellular location is the chloroplast thylakoid membrane. The catalysed reaction is 2 a plastoquinone + 4 hnu + 2 H2O = 2 a plastoquinol + O2. Photosystem II (PSII) is a light-driven water:plastoquinone oxidoreductase that uses light energy to abstract electrons from H(2)O, generating O(2) and a proton gradient subsequently used for ATP formation. It consists of a core antenna complex that captures photons, and an electron transfer chain that converts photonic excitation into a charge separation. The D1/D2 (PsbA/PsbD) reaction center heterodimer binds P680, the primary electron donor of PSII as well as several subsequent electron acceptors. This Mesostigma viride (Green alga) protein is Photosystem II protein D1.